We begin with the raw amino-acid sequence, 302 residues long: 1,2-dihydroxynaphthalene dioxygenase (302 aa).

VOC domains lie at 9–124 (ELGY…IFWG) and 149–270 (GLGH…PGWR). A Fe cation-binding site is contributed by histidine 152. Substrate contacts are provided by residues histidine 152, 199 to 200 (DH), histidine 215, and tyrosine 256. Histidine 215 is a binding site for Fe cation. Glutamate 266 serves as a coordination point for Fe cation.

Belongs to the extradiol ring-cleavage dioxygenase family. Fe(2+) serves as cofactor.

It catalyses the reaction naphthalene-1,2-diol + O2 = 2-hydroxychromene-2-carboxylate + H(+). Its pathway is aromatic compound metabolism; naphthalene degradation. Involved in the naphthalene catabolic pathway. Catalyzes the meta-cleavage of 1,2-dihydroxynaphthalene (1,2-DHN) to yield 2-hydroxychromene-2-carboxylic acid. The protein is 1,2-dihydroxynaphthalene dioxygenase (nahC) of Pseudomonas putida (Arthrobacter siderocapsulatus).